The primary structure comprises 226 residues: ATP-dependent dethiobiotin synthetase BioD (226 aa).

12–17 contributes to the ATP binding site; sequence GIGKTV. A Mg(2+)-binding site is contributed by T16. The active site involves K37. T41 contributes to the substrate binding site. Residues D49, 108-111, and 197-199 each bind ATP; these read EGAG and PAG. 2 residues coordinate Mg(2+): D49 and E108.

The protein belongs to the dethiobiotin synthetase family. Homodimer. It depends on Mg(2+) as a cofactor.

The protein resides in the cytoplasm. The enzyme catalyses (7R,8S)-7,8-diammoniononanoate + CO2 + ATP = (4R,5S)-dethiobiotin + ADP + phosphate + 3 H(+). It functions in the pathway cofactor biosynthesis; biotin biosynthesis; biotin from 7,8-diaminononanoate: step 1/2. Its function is as follows. Catalyzes a mechanistically unusual reaction, the ATP-dependent insertion of CO2 between the N7 and N8 nitrogen atoms of 7,8-diaminopelargonic acid (DAPA, also called 7,8-diammoniononanoate) to form a ureido ring. The protein is ATP-dependent dethiobiotin synthetase BioD of Mycolicibacterium vanbaalenii (strain DSM 7251 / JCM 13017 / BCRC 16820 / KCTC 9966 / NRRL B-24157 / PYR-1) (Mycobacterium vanbaalenii).